The primary structure comprises 471 residues: Maintenance of mitochondrial morphology protein 1 (471 aa).

The Lumenal portion of the chain corresponds to 1 to 21; the sequence is MSSPQNTSCPPSQHSLSFTQG. The chain crosses the membrane as a helical span at residues 22–42; it reads LLLGQLSVVLLIGAFIKFFIF. Residues 43–471 are Cytoplasmic-facing; the sequence is GESPSSSSRG…GSLPGAPAVA (429 aa). Positions 128 to 370 constitute an SMP-LTD domain; sequence QPESLDWFNV…EPRVQLVALP (243 aa). Disordered regions lie at residues 271–306, 395–415, and 448–471; these read GTTE…GVRS, EDPA…NRDG, and RGDT…PAVA. Positions 280 to 295 are enriched in basic and acidic residues; sequence PHPENQNESKPSRQDP. The segment covering 401–410 has biased composition (polar residues); that stretch reads ATHSGFTPVN.

This sequence belongs to the MMM1 family. As to quaternary structure, homodimer. Component of the ER-mitochondria encounter structure (ERMES) or MDM complex, composed of MMM1, MDM10, MDM12 and MDM34. An MMM1 homodimer associates with one molecule of MDM12 on each side in a pairwise head-to-tail manner, and the SMP-LTD domains of MMM1 and MDM12 generate a continuous hydrophobic tunnel for phospholipid trafficking.

Its subcellular location is the endoplasmic reticulum membrane. Functionally, component of the ERMES/MDM complex, which serves as a molecular tether to connect the endoplasmic reticulum (ER) and mitochondria. Components of this complex are involved in the control of mitochondrial shape and protein biogenesis, and function in nonvesicular lipid trafficking between the ER and mitochondria. The MDM12-MMM1 subcomplex functions in the major beta-barrel assembly pathway that is responsible for biogenesis of all outer membrane beta-barrel proteins, and acts in a late step after the SAM complex. The MDM10-MDM12-MMM1 subcomplex further acts in the TOM40-specific pathway after the action of the MDM12-MMM1 complex. Essential for establishing and maintaining the structure of mitochondria and maintenance of mtDNA nucleoids. The polypeptide is Maintenance of mitochondrial morphology protein 1 (Arthroderma otae (strain ATCC MYA-4605 / CBS 113480) (Microsporum canis)).